A 143-amino-acid chain; its full sequence is Nucleoside diphosphate kinase (143 aa).

K11, F59, R87, T93, R104, and N114 together coordinate ATP. H117 serves as the catalytic Pros-phosphohistidine intermediate.

It belongs to the NDK family. In terms of assembly, homotetramer. Mg(2+) serves as cofactor.

It localises to the cytoplasm. The enzyme catalyses a 2'-deoxyribonucleoside 5'-diphosphate + ATP = a 2'-deoxyribonucleoside 5'-triphosphate + ADP. The catalysed reaction is a ribonucleoside 5'-diphosphate + ATP = a ribonucleoside 5'-triphosphate + ADP. Functionally, major role in the synthesis of nucleoside triphosphates other than ATP. The ATP gamma phosphate is transferred to the NDP beta phosphate via a ping-pong mechanism, using a phosphorylated active-site intermediate. The chain is Nucleoside diphosphate kinase from Pseudoalteromonas translucida (strain TAC 125).